The sequence spans 2590 residues: DNA polymerase theta (2590 aa).

Basic residues predominate over residues 1–12 (MNLLRRSGKRRR). The segment at 1 to 33 (MNLLRRSGKRRRSESGSDSFSGSGGDSSASPQF) is disordered. Residues 16-30 (GSDSFSGSGGDSSAS) show a composition bias toward low complexity. ATP is bound by residues glutamine 96 and 115 to 122 (APTSAGKT). Positions 102–286 (LGQVLEGKNL…WLNAELYHTD (185 aa)) constitute a Helicase ATP-binding domain. Positions 102 to 554 (LGQVLEGKNL…STSQDMHTYA (453 aa)) are helicase activity. Residues 216–219 (DELH) carry the DEAH box motif. In terms of domain architecture, Helicase C-terminal spans 321 to 554 (GDEDHVVSLC…STSQDMHTYA (234 aa)). The interaction with RAD51 stretch occupies residues 847–894 (DEEEEAVEERRNMRTIWVTGRKGLTEREAAALIVEEARMILQQDLVEM). Residue lysine 990 is modified to N6-acetyllysine. The segment at 1034-1060 (KMSRSFRSWKRRKHLKRSRDSSPLKDS) is disordered. The span at 1040–1050 (RSWKRRKHLKR) shows a compositional bias: basic residues. Phosphoserine; by PLK1 is present on residues serine 1289, serine 1482, serine 1486, serine 1488, serine 1493, serine 1555, and serine 1563. Residues 1594-1622 (SDPVLDEHHQGDQDGGDQDERAEKSKLTG) form a disordered region. Positions 1598–1619 (LDEHHQGDQDGGDQDERAEKSK) are enriched in basic and acidic residues. 2 positions are modified to phosphoserine; by PLK1: serine 1628 and serine 1635. A Phosphothreonine; by PLK1 modification is found at threonine 1755. The tract at residues 1777 to 1797 (PSDIKNHDLSPGSRNGFKDNS) is disordered. The tract at residues 2097–2584 (AECESQKHIM…KVKIGASWGE (488 aa)) is DNA polymerase activity. Loop regions lie at residues 2142 to 2177 (KLPP…GRQF) and 2257 to 2322 (EIKM…VPFP). Mg(2+)-binding residues include aspartate 2330 and tyrosine 2331. The tract at residues 2491–2535 (QLETFHSTFKSHGHREGMLQSDQTGLSRKRKLQGMFCPIRGGFFI) is loop 3. Aspartate 2540 contacts Mg(2+).

This sequence belongs to the DNA polymerase type-A family. Homomultimer; forms homodimers and homotetramers. Interacts with RAD51. Interacts with ORC2 and ORC4. Interacts with RHNO1; interaction takes place during mitosis and promotes POLQ recruitment to DNA damage sites. Interacts (when phosphorylated) with TOPBP1 (via BRCT domains 7 and 8); promoting POLQ recruitment to DNA damage sites. Requires Mg(2+) as cofactor. Post-translationally, phosphorylated by PLK1; promoting interaction with TOPBP1 and recruitment to DNA damage sites. As to expression, highly expressed in testis.

It is found in the nucleus. It localises to the chromosome. It catalyses the reaction DNA(n) + a 2'-deoxyribonucleoside 5'-triphosphate = DNA(n+1) + diphosphate. The enzyme catalyses ATP + H2O = ADP + phosphate + H(+). Its activity is regulated as follows. Specifically inhibited by the antibiotic novobiocin. The polymerase activity is specifically inhibited by the small molecule ART558. Novobiocin and ART558 confer specific killing of BRCA1/2-deficient cells and synergize with the poly [ADP-ribose] polymerase (PARP) inhibitor olaparib. Low-fidelity DNA polymerase with a helicase activity that promotes microhomology-mediated end-joining (MMEJ), an alternative non-homologous end-joining (NHEJ) machinery required to repair double-strand breaks in DNA during mitosis. MMEJ is an error-prone repair pathway that produces deletions of sequences from the strand being repaired and promotes genomic rearrangements, such as telomere fusions, some of them leading to cellular transformation. MMEJ is required during mitosis to repair persistent double-strand breaks that originate in S-phase. Although error-prone, MMEJ protects against chromosomal instability and tumorigenesis. The polymerase acts by binding directly the 2 ends of resected double-strand breaks, allowing microhomologous sequences in the overhangs to form base pairs. It then extends each strand from the base-paired region using the opposing overhang as a template. Requires partially resected DNA containing 2 to 6 base pairs of microhomology to perform MMEJ. The polymerase lacks proofreading activity and is highly promiscuous: unlike most polymerases, promotes extension of ssDNA and partial ssDNA (pssDNA) substrates. When the ends of a break do not contain terminal microhomology must identify embedded complementary sequences through a scanning step. Also acts as a DNA helicase, promoting dissociation of the replication protein A complex (RPA/RP-A), composed of RPA1, RPA2 and RPA3, from resected double-strand breaks to allow their annealing and subsequent joining by MMEJ. Removal of RPA/RP-A complex proteins prevents RAD51 accumulation at resected ends, thereby inhibiting homology-recombination repair (HR) pathway. Also shows RNA-directed DNA polymerase activity to mediate DNA repair in vitro; however this activity needs additional evidence in vivo. May also have lyase activity. Involved in somatic hypermutation of immunoglobulin genes, a process that requires the activity of DNA polymerases to ultimately introduce mutations at both A/T and C/G base pairs. POLQ-mediated end joining activity is involved in random integration of exogenous DNA hampers. The sequence is that of DNA polymerase theta from Homo sapiens (Human).